Consider the following 423-residue polypeptide: Glutamyl-tRNA reductase (423 aa).

Substrate contacts are provided by residues threonine 49–arginine 52, serine 107, glutamate 112–glutamine 114, and glutamine 118. Cysteine 50 acts as the Nucleophile in catalysis. Glycine 187–isoleucine 192 contributes to the NADP(+) binding site.

This sequence belongs to the glutamyl-tRNA reductase family. As to quaternary structure, homodimer.

The enzyme catalyses (S)-4-amino-5-oxopentanoate + tRNA(Glu) + NADP(+) = L-glutamyl-tRNA(Glu) + NADPH + H(+). It functions in the pathway porphyrin-containing compound metabolism; protoporphyrin-IX biosynthesis; 5-aminolevulinate from L-glutamyl-tRNA(Glu): step 1/2. Its function is as follows. Catalyzes the NADPH-dependent reduction of glutamyl-tRNA(Glu) to glutamate 1-semialdehyde (GSA). This Pseudoalteromonas atlantica (strain T6c / ATCC BAA-1087) protein is Glutamyl-tRNA reductase.